An 854-amino-acid chain; its full sequence is Disrupted in schizophrenia 1 protein (854 aa).

A compositionally biased stretch (gly residues) spans 1 to 18 (MPGGGPQGAPAAAGGGGV). 4 disordered regions span residues 1–24 (MPGG…RAGS), 179–205 (SAEL…SHSA), 221–257 (GERG…GPHE), and 278–323 (AQAA…SGDA). The segment at 1–292 (MPGGGPQGAP…NSSRPERDMH (292 aa)) is interaction with MAP1A. The Interaction with FBXW7 signature appears at 197 to 203 (PTPPGSH). Residues 285-295 (SRPERDMHSLP) are compositionally biased toward basic and acidic residues. The tract at residues 293–696 (SLPDMDPGSS…LGKVWEADLE (404 aa)) is interaction with TRAF3IP1. Low complexity predominate over residues 296 to 309 (DMDPGSSSSLDPSL). 3 coiled-coil regions span residues 366-394 (ENDD…HFQL), 452-505 (ITRR…CDLT), and 602-666 (WTAK…SVKE). Residue Lys-372 forms a Glycyl lysine isopeptide (Lys-Gly) (interchain with G-Cter in ubiquitin) linkage. The interval 440-597 (LEPTAQDSLH…LLEAKMHAIS (158 aa)) is required for localization to punctate cytoplasmic foci. A necessary and sufficient for interaction with PCNT and localization at the centrosome region spans residues 446-854 (DSLHVSITRR…MTAGVHEAQA (409 aa)). An interaction with ATF4 and ATF5 region spans residues 598–854 (GNHFWTAKDL…MTAGVHEAQA (257 aa)). The disordered stretch occupies residues 716-739 (VEDERQMDDLEGAAPPIPPRLHSE). Residues 727–854 (GAAPPIPPRL…MTAGVHEAQA (128 aa)) are interaction with PAFAH1B1. The stretch at 802 to 830 (SHDEDLIQSLRRELQMVKETLQAMILQLQ) forms a coiled coil. The tract at residues 802–835 (SHDEDLIQSLRRELQMVKETLQAMILQLQPAKEA) is interaction with NDEL1.

As to quaternary structure, interacts with NDEL1. Interacts with CCDC88A (via C-terminus); the interaction is direct. Interacts with GSK3B. Interacts with tubulin alpha, ACTN2, ANKHD1, ATF4, ATF5, CEP63, EIF3S3, MAP1A, NDEL1, PAFAH1B1, RANBP9, SPTBN4, SYNE1 and TRAF3IP1. Interaction with microtubules may be mediated in part by TRAF3IP1. Interacts (via C-terminal) with PCNT. Interacts with CHCHD6. Interacts with CCDC141. Interacts with FBXW7, the substrate-recognition component of a SCF (SKP1-CUL1-F-box protein) E3 ubiquitin-protein ligase complex; the interaction targets DISC1 for proteasomal degradation. Interacts with ZNF365. Interacts with ATF4; inhibiting ATF4 transcription factor activity by disrupting ATF4 dimerization and DNA-binding. Interacts with PDE4B (isoform PDE4B5). Post-translationally, ubiquitinated. Ubiquitination with 'Lys-48'-linked polyubiquitin chains leads to its proteasomal degradation. In terms of tissue distribution, ubiquitous. Highly expressed in the dentate gyrus of the hippocampus. Also expressed in the temporal and parahippocampal cortices and cells of the white matter.

The protein localises to the cytoplasm. It is found in the cytoskeleton. It localises to the mitochondrion. The protein resides in the microtubule organizing center. Its subcellular location is the centrosome. The protein localises to the postsynaptic density. In terms of biological role, involved in the regulation of multiple aspects of embryonic and adult neurogenesis. Required for neural progenitor proliferation in the ventrical/subventrical zone during embryonic brain development and in the adult dentate gyrus of the hippocampus. Participates in the Wnt-mediated neural progenitor proliferation as a positive regulator by modulating GSK3B activity and CTNNB1 abundance. Plays a role as a modulator of the AKT-mTOR signaling pathway controlling the tempo of the process of newborn neurons integration during adult neurogenesis, including neuron positioning, dendritic development and synapse formation. Inhibits the activation of AKT-mTOR signaling upon interaction with CCDC88A. Regulates the migration of early-born granule cell precursors toward the dentate gyrus during the hippocampal development. Inhibits ATF4 transcription factor activity in neurons by disrupting ATF4 dimerization and DNA-binding. Plays a role, together with PCNT, in the microtubule network formation. This is Disrupted in schizophrenia 1 protein from Homo sapiens (Human).